A 1427-amino-acid polypeptide reads, in one-letter code: Protein expanded (1427 aa).

In terms of domain architecture, FERM spans 26 to 399; it reads RFLALRLLGQ…DTHQWSMKLA (374 aa). Residues 176–212 are disordered; the sequence is GDAPPGTSNSKDDSGEETSASPSNGGRGLSATTTLPK. A compositionally biased stretch (polar residues) spans 192 to 211; that stretch reads ETSASPSNGGRGLSATTTLP. 2 positions are modified to phosphotyrosine: tyrosine 227 and tyrosine 423. 2 disordered regions span residues 520 to 566 and 611 to 656; these read VRPQ…IGSQ and NSAL…SGVY. Polar residues predominate over residues 524 to 544; that stretch reads DASSNGATIVTNSSVQRNSMG. Low complexity predominate over residues 545 to 559; the sequence is TTANDSSTATDSPSS. Phosphotyrosine is present on tyrosine 679. Positions 688-710 are enriched in basic and acidic residues; sequence EETHVQHSDSVDGKKKEDFRPRS. 5 disordered regions span residues 688–732, 766–792, 815–880, 939–963, and 1000–1022; these read EETH…DNKH, YVTL…YSAR, APKP…SLKS, HNSN…HRHS, and LAPP…HPHL. Residue tyrosine 766 is modified to Phosphotyrosine. The segment covering 818-838 has biased composition (pro residues); sequence PDSPPCSPPVPPAPIPAPPPA. The RXPPXY motif signature appears at 842–847; that stretch reads RDPPPY. Positions 848-859 are enriched in polar residues; that stretch reads SISSKPRPTSLI. A compositionally biased stretch (low complexity) spans 860–877; sequence SVSSSAHPAPSAAGSMSS. The span at 951–963 shows a compositional bias: basic residues; it reads LHHHHVPSHHRHS. A compositionally biased stretch (pro residues) spans 1001–1019; sequence APPPPSLPRQPPPPPPPNH. The SH3-binding signature appears at 1008–1020; that stretch reads PRQPPPPPPPNHP. Residue tyrosine 1103 is modified to Phosphotyrosine. An SH3-binding motif is present at residues 1149–1157; sequence PPPPPPLHP. Phosphoserine is present on serine 1181. Disordered stretches follow at residues 1190–1267 and 1345–1398; these read DLLP…WAGE and TGQE…LPVQ. 2 stretches are compositionally biased toward pro residues: residues 1214–1230 and 1237–1246; these read PPMP…PSKP and PIPPRKPPTL. Composition is skewed to polar residues over residues 1253–1262 and 1345–1370; these read SPLTKTSSGA and TGQE…SSAG. The segment covering 1376-1388 has biased composition (basic residues); the sequence is KARKGSTVSHRHP.

In terms of assembly, forms a complex with Kibra and Mer. Interacts (via RXPPXY motif) with Kibra (via domain WW 1). Interacts with Mer and Hpo (via SARAH domain). Interacts with Schip1; the interaction results in recruitment of Schip1 to the apical cell membrane. Interacts with ack and yki. Phosphorylated by Ack at several tyrosines including Tyr-227, Tyr-423, Tyr-679, Tyr-766 and Tyr-1103.

The protein resides in the apical cell membrane. Activates the Hippo/SWH (Sav/Wts/Hpo) signaling pathway, a signaling pathway that plays a pivotal role in organ size control and tumor suppression by restricting proliferation and promoting apoptosis. The core of this pathway is composed of a kinase cascade wherein Hippo (Hpo), in complex with its regulatory protein Salvador (Sav), phosphorylates and activates Warts (Wts) in complex with its regulatory protein Mats, which in turn phosphorylates and inactivates the Yorkie (Yki) oncoprotein. Ex acts synergistically along with Mer and Kibra to regulate the Hippo signaling pathway. Involved in the control of cell proliferation in imaginal disks. May bind to certain proteins of signal transduction pathways by interaction with their SH3 domains. Required for apical localization of Schip1. This chain is Protein expanded (ex), found in Drosophila melanogaster (Fruit fly).